We begin with the raw amino-acid sequence, 371 residues long: Protein lifeguard 1 (371 aa).

Positions 1 to 145 (MSHEKSFLVS…EGPPSYYDNQ (145 aa)) are disordered. Residues 14–49 (YPPPNPGYPGGPQPPMPPYAQPPYPGAPYPQPPFQP) are compositionally biased toward pro residues. Residues 84-98 (YPQEGYPQGPYPQGG) are compositionally biased toward low complexity. Residues 102-114 (GPYPQSPFPPNPY) are compositionally biased toward pro residues. Helical transmembrane passes span 165–185 (VFLV…VFTF), 197–217 (VWTY…LSCC), 228–248 (LVAL…IASF), 253–273 (AVIM…IFSM), 283–303 (MGVL…CIFI), 307–327 (ILEI…LAVD), and 346–366 (FAAL…LTII).

The protein belongs to the BI1 family. LFG subfamily.

The protein localises to the membrane. Functionally, potential apoptotic regulator. This is Protein lifeguard 1 (GRINA) from Homo sapiens (Human).